A 160-amino-acid polypeptide reads, in one-letter code: Large ribosomal subunit protein uL15 (160 aa).

A compositionally biased stretch (basic and acidic residues) spans 1-13 (MKLNELRDNEGAA). Residues 1-51 (MKLNELRDNEGAARKKKRVARGPGSGKGKTAGRGIKGQKSRSGVALNGYEG) are disordered. Residues 23 to 35 (PGSGKGKTAGRGI) show a composition bias toward gly residues.

The protein belongs to the universal ribosomal protein uL15 family. Part of the 50S ribosomal subunit.

Its function is as follows. Binds to the 23S rRNA. In Cereibacter sphaeroides (strain ATCC 17025 / ATH 2.4.3) (Rhodobacter sphaeroides), this protein is Large ribosomal subunit protein uL15.